The primary structure comprises 66 residues: FMRFamide-like neuropeptide 21 (66 aa).

The first 16 residues, 1–16, serve as a signal peptide directing secretion; it reads MRLFILLSCLLAWVLA.

The protein belongs to the FARP (FMRFamide related peptide) family. May be processed by convertase egl-3. Expressed in the ADL, ASE and ASH sensory neurons, the URA motor neurons and the MC, M2 and M4 pharyngeal neurons.

It is found in the secreted. FMRFamide-like neuropeptide. Involved in modulating locomotion quiescence during the sleep-like state called lethargus which occurs during molting between larval and adult stages, acting via the G-protein coupled receptor npr-1. Plays a role in modulating social and feeding behavior. Its function is as follows. Ligand to G-protein coupled receptor npr-1. The polypeptide is FMRFamide-like neuropeptide 21 (Caenorhabditis elegans).